Here is a 77-residue protein sequence, read N- to C-terminus: MISKEKIARINELAKKAKSGSLTDEEKAEQQKLRQEYLQGVRASMKNTLKTVTIVDPEGNDVTPEKLKQEKRNRRLH.

Residues 57 to 77 (PEGNDVTPEKLKQEKRNRRLH) form a disordered region.

It belongs to the UPF0291 family.

The protein resides in the cytoplasm. The chain is UPF0291 protein BLi02035/BL02933 from Bacillus licheniformis (strain ATCC 14580 / DSM 13 / JCM 2505 / CCUG 7422 / NBRC 12200 / NCIMB 9375 / NCTC 10341 / NRRL NRS-1264 / Gibson 46).